Here is a 321-residue protein sequence, read N- to C-terminus: Low affinity immunoglobulin epsilon Fc receptor (321 aa).

The Cytoplasmic portion of the chain corresponds to 1–21 (MEEGQYSEIEELPRRRCCRRG). 2 S-palmitoyl cysteine lipidation sites follow: C17 and C18. A helical; Signal-anchor for type II membrane protein transmembrane segment spans residues 22–47 (TQIVLLGLVTAALWAGLLTLLLLWHW). Topologically, residues 48–321 (DTTQSLKQLE…LPTPSAPLHS (274 aa)) are extracellular. N-linked (GlcNAc...) asparagine glycosylation is present at N63. Residues 66 to 85 (QVSKNLESHHGDQMAQKSQS) are disordered. 3 consecutive repeats follow at residues 69 to 89 (KNLE…TQIS), 90 to 110 (QELE…LELS), and 111 to 131 (WNLN…LNER). 4 disulfide bridges follow: C160–C288, C163–C174, C191–C282, and C259–C273. The C-type lectin domain maps to 162-284 (TCPEKWINFQ…RKLGAWVCDR (123 aa)). The Ca(2+) site is built by E249, T251, N269, and D270. Residues 290–321 (PPASEGSAESMGPDSRPDPDGRLPTPSAPLHS) are disordered. A glycan (O-linked (Xyl...) (chondroitin sulfate) serine) is linked at S296.

Homotrimer. Interacts (via C-type lectin domain) with IGHE (via CH3 region); this interaction regulates IgE homeostasis. Interacts (via the C-terminus) with CR2/CD21 (via Sushi domain 1 and 2). N- and O-glycosylated. Post-translationally, the secreted form sCD23 is produced by ADAM10-mediated ectodomain shedding. In terms of tissue distribution, detected in urine (at protein level).

It is found in the cell membrane. It localises to the secreted. Low-affinity receptor for immunoglobulin E (IgE) and CR2/CD21. Has essential roles in the regulation of IgE production and in the differentiation of B cells. On B cells, initiates IgE-dependent antigen uptake and presentation to T cells. On macrophages, upon IgE binding and antigen cross-linking induces intracellular killing of parasites through activation of L-Arginine-nitric oxide pathway. This chain is Low affinity immunoglobulin epsilon Fc receptor (FCER2), found in Homo sapiens (Human).